A 553-amino-acid chain; its full sequence is Expansin-like protein 7 (553 aa).

The first 19 residues, 1-19 (MRLLGSLILTLSLIASAFS), serve as a signal peptide directing secretion. Asn-39 carries N-linked (GlcNAc...) asparagine glycosylation. An Expansin-like EG45 domain is found at 41–139 (SGSCEYGAYN…RKVSCDASGP (99 aa)). 2 disulfide bridges follow: Cys-44–Cys-73 and Cys-76–Cys-134. Asn-276, Asn-325, and Asn-406 each carry an N-linked (GlcNAc...) asparagine glycan. 2 disordered regions span residues 421 to 447 (GGSGASGVATSSHTGVSSSSSTASSTA) and 460 to 531 (SSSA…DEHH). Low complexity-rich tracts occupy residues 460–476 (SSSASSTSVSSTTAGGK) and 484–493 (ISTSGITGSG). The segment covering 497–516 (AASTSKTTSNPTGKTTGMTG) has biased composition (polar residues). Over residues 520–531 (DHSESHSSDEHH) the composition is skewed to basic and acidic residues.

Belongs to the expansin family. Expansin A subfamily.

The protein resides in the secreted. In terms of biological role, may serve to lubricate the movement of the cellulose microfibrils during cell growth and wall extension and/or may serve to maintain the fluid state of the slug cell wall. Overexpression shows aberrant stalk formation. The polypeptide is Expansin-like protein 7 (expl7) (Dictyostelium discoideum (Social amoeba)).